We begin with the raw amino-acid sequence, 259 residues long: Leucine-rich repeat-containing protein 61 (259 aa).

LRR repeat units follow at residues 32-53, 54-75, 76-97, and 98-119; these read SILL…GECL, GLEW…ASLR, QLAV…ATCE, and NLQS…QCLA. The LRRCT domain occupies 138 to 178; that stretch reads NPLCANPSYWAAVRELLPGLKVIDGERVIGRGSEFYQLCRD.

The sequence is that of Leucine-rich repeat-containing protein 61 (LRRC61) from Homo sapiens (Human).